The following is a 376-amino-acid chain: tRNA-specific 2-thiouridylase MnmA (376 aa).

ATP is bound by residues 9–16 and methionine 35; that span reads AMSGGIDS. Residue cysteine 105 is the Nucleophile of the active site. Cysteine 105 and cysteine 202 are oxidised to a cystine. An ATP-binding site is contributed by glycine 129. Residues 151–153 form an interaction with tRNA region; the sequence is KDQ. Cysteine 202 (cysteine persulfide intermediate) is an active-site residue. An interaction with tRNA region spans residues 312 to 313; it reads RY.

It belongs to the MnmA/TRMU family.

It localises to the cytoplasm. It carries out the reaction S-sulfanyl-L-cysteinyl-[protein] + uridine(34) in tRNA + AH2 + ATP = 2-thiouridine(34) in tRNA + L-cysteinyl-[protein] + A + AMP + diphosphate + H(+). Its function is as follows. Catalyzes the 2-thiolation of uridine at the wobble position (U34) of tRNA, leading to the formation of s(2)U34. The chain is tRNA-specific 2-thiouridylase MnmA from Amoebophilus asiaticus (strain 5a2).